Here is a 620-residue protein sequence, read N- to C-terminus: Chaperone protein HtpG (620 aa).

The segment at 1–339 (MAKHQFQTEI…SEDLPLNVSR (339 aa)) is a; substrate-binding. The interval 340–546 (ELLQENRILA…ASDPMAGMAA (207 aa)) is b. A c region spans residues 547-620 (MFAQMGQEMP…RVASLATKAL (74 aa)).

The protein belongs to the heat shock protein 90 family. As to quaternary structure, homodimer.

The protein localises to the cytoplasm. Functionally, molecular chaperone. Has ATPase activity. The sequence is that of Chaperone protein HtpG from Sulfurovum sp. (strain NBC37-1).